The primary structure comprises 106 residues: UPF0145 protein CPF_0876 (106 aa).

This sequence belongs to the UPF0145 family.

The chain is UPF0145 protein CPF_0876 from Clostridium perfringens (strain ATCC 13124 / DSM 756 / JCM 1290 / NCIMB 6125 / NCTC 8237 / Type A).